The chain runs to 235 residues: MTIKAQPTLHTARLELVPLGHEHREFTMKLDMDPEVMKMVAFGRPFTEDEAIQVHTWLMNCATSVPGFGTWVGFAEGEFVGWWVLAPVPTTENPKSFRTDRTEYGFRVSPKFWGQGYAKEGAREMVRYAFEELGLAEVIGETMTINMASRAVMAGCGLTHVETFFNKYDTPPPGIEEGEVRYSITREEWLRMQKPSMTRSRWFPAFASWLPRLLLSRLWSYIFQGRRLAAGAASP.

Residues 14–190 (LELVPLGHEH…RYSITREEWL (177 aa)) enclose the N-acetyltransferase domain. Residues 106 to 108 (FRV), Gly-114, Asn-146, and 151 to 153 (AVM) contribute to the CoA site.

It functions in the pathway siderophore biosynthesis. Functionally, fsC-acetyl coenzyme A-N(2)-transacetylase; part of the siderophore biosynthetic pathway. Aspergillus fumigatus produces 4 types of siderophores, low-molecular-mass iron chelators, including excreted fusarinine C (FsC) and triacetylfusarinine C (TAFC) for iron uptake and intacellular ferricrocin (FC) for hyphal and hydroxyferricrocin (HFC) for conidial iron distribution and storage. TAFC consists of 3 N(2)-acetyl-N(5)-anhydromevalonyl-N(5)-hydroxyornithine residues cyclically linked by ester bonds; FC is a cyclic hexapeptide with the structure Gly-Ser-Gly-(N(5)-acetyl-N(5)-hydroxyornithine)x3. The biosynthesis of all four siderophores depends on the hydroxylation of ornithine, catalyzed by the monooxygenase sidA. Subsequently, the pathways for biosynthesis of extra- and intracellular siderophores split. For biosynthesis of extracellular siderophores, the transacylase sidF transfers anhydromevalonyl to N(5)-hydroxyornithine. The required anhydromevalonyl-CoA moiety is derived from mevalonate by CoA ligation and dehydration catalyzed by sidI and sidH respectively. The acetylation of N(5)-hydroxyornithine for FC biosynthesis involves the constitutively expressed sidL. FC is hydroxylated to HFC by an as yet uncharacterized enzyme during conidiation. Assembly of fusarinine C (FsC) and FC is catalyzed by two different nonribosomal peptide synthetases (NRPS), sidD and sidC respectively. Subsequently, sidG catalyzes N2-acetylation of FsC for forming TAFC. Both extra- and intracellular siderophores are crucial for growth during iron limitation and virulence. In Aspergillus fumigatus (strain ATCC MYA-4609 / CBS 101355 / FGSC A1100 / Af293) (Neosartorya fumigata), this protein is FsC-acetyl coenzyme A-N(2)-transacetylase.